A 272-amino-acid polypeptide reads, in one-letter code: 5'-AMP-activated protein kinase subunit beta-2 (272 aa).

The segment at methionine 1–lysine 52 is disordered. Serine 39 bears the Phosphoserine mark. Phosphothreonine is present on threonine 40. A Phosphoserine; by ULK1 modification is found at serine 69. Phosphoserine is present on residues serine 95 and serine 108. A Phosphothreonine modification is found at threonine 148. Serine 158, serine 170, serine 174, and serine 184 each carry phosphoserine.

Belongs to the 5'-AMP-activated protein kinase beta subunit family. In terms of assembly, AMPK is a heterotrimer of an alpha catalytic subunit (PRKAA1 or PRKAA2), a beta (PRKAB1 or PRKAB2) and a gamma non-catalytic subunits (PRKAG1, PRKAG2 or PRKAG3). Phosphorylated when associated with the catalytic subunit (PRKAA1 or PRKAA2). Phosphorylated by ULK1 and ULK2; leading to negatively regulate AMPK activity and suggesting the existence of a regulatory feedback loop between ULK1, ULK2 and AMPK.

Its function is as follows. Non-catalytic subunit of AMP-activated protein kinase (AMPK), an energy sensor protein kinase that plays a key role in regulating cellular energy metabolism. In response to reduction of intracellular ATP levels, AMPK activates energy-producing pathways and inhibits energy-consuming processes: inhibits protein, carbohydrate and lipid biosynthesis, as well as cell growth and proliferation. AMPK acts via direct phosphorylation of metabolic enzymes, and by longer-term effects via phosphorylation of transcription regulators. Also acts as a regulator of cellular polarity by remodeling the actin cytoskeleton; probably by indirectly activating myosin. Beta non-catalytic subunit acts as a scaffold on which the AMPK complex assembles, via its C-terminus that bridges alpha (PRKAA1 or PRKAA2) and gamma subunits (PRKAG1, PRKAG2 or PRKAG3). This is 5'-AMP-activated protein kinase subunit beta-2 (PRKAB2) from Homo sapiens (Human).